Consider the following 154-residue polypeptide: Transcriptional repressor NrdR (154 aa).

Residues 3 to 34 (CPFCRHSDSRVIDSRETDEGQAIRRRRSCPEC) fold into a zinc finger. The 91-residue stretch at 46–136 (VAVVKRSGVT…VYRSFSSADD (91 aa)) folds into the ATP-cone domain.

This sequence belongs to the NrdR family. Zn(2+) serves as cofactor.

Functionally, negatively regulates transcription of bacterial ribonucleotide reductase nrd genes and operons by binding to NrdR-boxes. The polypeptide is Transcriptional repressor NrdR (Mycobacterium leprae (strain Br4923)).